Here is a 304-residue protein sequence, read N- to C-terminus: Quinolinate synthase (304 aa).

Residues His24 and Ser41 each contribute to the iminosuccinate site. Cys86 is a binding site for [4Fe-4S] cluster. Iminosuccinate contacts are provided by residues Tyr112–Asn114 and Ser129. Cys171 is a binding site for [4Fe-4S] cluster. Iminosuccinate contacts are provided by residues His197–Glu199 and Thr214. Residue Cys259 participates in [4Fe-4S] cluster binding.

The protein belongs to the quinolinate synthase family. Type 2 subfamily. It depends on [4Fe-4S] cluster as a cofactor.

It is found in the cytoplasm. It carries out the reaction iminosuccinate + dihydroxyacetone phosphate = quinolinate + phosphate + 2 H2O + H(+). It functions in the pathway cofactor biosynthesis; NAD(+) biosynthesis; quinolinate from iminoaspartate: step 1/1. Catalyzes the condensation of iminoaspartate with dihydroxyacetone phosphate to form quinolinate. This chain is Quinolinate synthase, found in Methanosarcina barkeri (strain Fusaro / DSM 804).